The primary structure comprises 417 residues: UPF0761 membrane protein Daci_4966 (417 aa).

6 helical membrane passes run 49–69 (VLALVPFFTVALALFTAFPIF), 106–126 (QLGMAGFSILVITAVALILTI), 146–166 (VLIYWAAITLGPLVLGLSLVL), 187–207 (FIFDSIEYLALAAGMAGLYHY), 235–255 (ALGLYLASVPTYSVIYGTFAT), and 256–276 (LPILLIWIYMAWIIVLLGAVV).

The protein belongs to the UPF0761 family.

It is found in the cell inner membrane. This Delftia acidovorans (strain DSM 14801 / SPH-1) protein is UPF0761 membrane protein Daci_4966.